The sequence spans 523 residues: MGGKNKIEILFQLQSALSRRRISSLVDFRRVFPPETPNHKNNITLSRFHFLGTHFLHSLGAPDKFPNRFNDDKDKQSALDVHNIIKHHRGSSPEKIKRILDKCGIDLTEELVLEVVNRNRSDWKPAYILSQLVVKQSVHLSSSMLYNEILDVLGKMRRFEEFHQVFDEMSKRDGFVNEKTYEVLLNRYAAAHKVDEAVGVFERRKEFGIDDDLVAFHGLLMWLCRYKHVEFAETLFCSRRREFGCDIKAMNMILNGWCVLGNVHEAKRFWKDIIASKCRPDVVSYGTMINALTKKGKLGKAMELYRAMWDTRRNPDVKICNNVIDALCFKKRIPEALEVFREISEKGPDPNVVTYNSLLKHLCKIRRTEKVWELVEEMELKGGSCSPNDVTFSYLLKYSQRSKDVDIVLERMAKNKCEMTSDLYNLMFRLYVQWDKEEKVREIWSEMERSGLGPDQRTYTIRIHGLHTKGKIGEALSYFQEMMSKGMVPEPRTEMLLNQNKTKPRVEDKMLRSNLTSEESESD.

PPR repeat units follow at residues 142-172 (SSML…MSKR), 177-211 (NEKT…GIDD), 212-242 (DLVA…RRRE), 246-280 (DIKA…KCRP), 281-315 (DVVS…RRNP), 316-350 (DVKI…GPDP), 351-385 (NVVT…GGSC), 388-418 (NDVT…NKCE), 420-454 (TSDL…GLGP), and 455-489 (DQRT…GMVP). Residues 497 to 523 (LNQNKTKPRVEDKMLRSNLTSEESESD) are disordered.

It belongs to the PPR family. P subfamily.

The polypeptide is Putative pentatricopeptide repeat-containing protein At3g15200 (Arabidopsis thaliana (Mouse-ear cress)).